Here is a 513-residue protein sequence, read N- to C-terminus: Maturase K (513 aa).

The protein belongs to the intron maturase 2 family. MatK subfamily.

It localises to the plastid. Its subcellular location is the chloroplast. In terms of biological role, usually encoded in the trnK tRNA gene intron. Probably assists in splicing its own and other chloroplast group II introns. This is Maturase K from Cynodon dactylon (Bermuda grass).